A 561-amino-acid chain; its full sequence is Alpha-1D adrenergic receptor (561 aa).

Residues 1 to 90 (MTFRDILSVT…VGGLVVSAQG (90 aa)) are Extracellular-facing. The interval 10–71 (TFEGPRSSSS…SSTGEPGAAA (62 aa)) is disordered. The span at 21–56 (GGSGAGGGAGTVGPEGGAVGGVPGATGGGAVVGTGS) shows a compositional bias: gly residues. Residues Asn60 and Asn76 are each glycosylated (N-linked (GlcNAc...) asparagine). A helical membrane pass occupies residues 91 to 115 (VGVGVFLAAFILTAVAGNLLVILSV). The Cytoplasmic portion of the chain corresponds to 116 to 127 (ACNRHLQTVTNY). The helical transmembrane segment at 128 to 153 (FIVNLAVADLLLSAAVLPFSATMEVL) threads the bilayer. Topologically, residues 154 to 163 (GFWAFGRTFC) are extracellular. Residues 164-186 (DVWAAVDVLCCTASILSLCTISV) form a helical membrane-spanning segment. Over 187–207 (DRYVGVRHSLKYPAIMTERKA) the chain is Cytoplasmic. The chain crosses the membrane as a helical span at residues 208–232 (AAILALLWAVALVVSVGPLLGWKEP). Residues 233 to 245 (VPPDERFCGITEE) lie on the Extracellular side of the membrane. Residues 246-269 (VGYAIFSSVCSFYLPMAVIVVMYC) traverse the membrane as a helical segment. At 270–342 (RVYVVARSTT…KFSREKKAAK (73 aa)) the chain is on the cytoplasmic side. The helical transmembrane segment at 343–367 (TLAIVVGVFVLCWFPFFFVLPLGSL) threads the bilayer. Topologically, residues 368 to 374 (FPQLKPS) are extracellular. Residues 375–399 (EGVFKVIFWLGYFNSCVNPLIYPCS) traverse the membrane as a helical segment. Topologically, residues 400–561 (SREFKRAFLR…DYSNLRETDI (162 aa)) are cytoplasmic. The S-palmitoyl cysteine moiety is linked to residue Cys413. Residues 452–481 (APLALTAHPGAGSADTPETQDSVSSSRKPA) form a disordered region. Positions 467–479 (TPETQDSVSSSRK) are enriched in polar residues.

This sequence belongs to the G-protein coupled receptor 1 family. Adrenergic receptor subfamily. ADRA1D sub-subfamily. In terms of assembly, interacts with FLNA (via filamin repeat 21); increases PKA-mediated phosphorylation of FLNA. Palmitoylated. Palmitoylation by ZDHHC21 may increase the expression of the receptor and regulate downstream signaling. As to expression, vas deferens, hippocampus, cerebral cortex, aorta, brain stem, heart and spleen.

Its subcellular location is the cell membrane. This alpha-adrenergic receptor mediates its effect through the influx of extracellular calcium. The polypeptide is Alpha-1D adrenergic receptor (Adra1d) (Rattus norvegicus (Rat)).